A 156-amino-acid polypeptide reads, in one-letter code: ATP synthase subunit b (156 aa).

Residues 7-27 (LIGQTVAFIIFVWFCMKFVWP) traverse the membrane as a helical segment.

This sequence belongs to the ATPase B chain family. As to quaternary structure, F-type ATPases have 2 components, F(1) - the catalytic core - and F(0) - the membrane proton channel. F(1) has five subunits: alpha(3), beta(3), gamma(1), delta(1), epsilon(1). F(0) has three main subunits: a(1), b(2) and c(10-14). The alpha and beta chains form an alternating ring which encloses part of the gamma chain. F(1) is attached to F(0) by a central stalk formed by the gamma and epsilon chains, while a peripheral stalk is formed by the delta and b chains.

The protein localises to the cell inner membrane. F(1)F(0) ATP synthase produces ATP from ADP in the presence of a proton or sodium gradient. F-type ATPases consist of two structural domains, F(1) containing the extramembraneous catalytic core and F(0) containing the membrane proton channel, linked together by a central stalk and a peripheral stalk. During catalysis, ATP synthesis in the catalytic domain of F(1) is coupled via a rotary mechanism of the central stalk subunits to proton translocation. Its function is as follows. Component of the F(0) channel, it forms part of the peripheral stalk, linking F(1) to F(0). This Shewanella oneidensis (strain ATCC 700550 / JCM 31522 / CIP 106686 / LMG 19005 / NCIMB 14063 / MR-1) protein is ATP synthase subunit b.